The primary structure comprises 395 residues: Elongation factor Tu (395 aa).

Positions Lys10 to Gln204 constitute a tr-type G domain. The segment at Gly19–Thr26 is G1. Gly19–Thr26 serves as a coordination point for GTP. Thr26 serves as a coordination point for Mg(2+). Residues Gly60 to Asn64 form a G2 region. The segment at Asp81–Gly84 is G3. GTP is bound by residues Asp81–His85 and Asn136–Asp139. The tract at residues Asn136–Asp139 is G4. A G5 region spans residues Ser174–Leu176.

It belongs to the TRAFAC class translation factor GTPase superfamily. Classic translation factor GTPase family. EF-Tu/EF-1A subfamily. As to quaternary structure, monomer.

It is found in the cytoplasm. The catalysed reaction is GTP + H2O = GDP + phosphate + H(+). In terms of biological role, GTP hydrolase that promotes the GTP-dependent binding of aminoacyl-tRNA to the A-site of ribosomes during protein biosynthesis. In Ligilactobacillus salivarius (strain UCC118) (Lactobacillus salivarius), this protein is Elongation factor Tu.